The chain runs to 482 residues: MPTYLITVAGEIPLKSKKTRSRLYYRLIDNIRRRLARRNITLQVAKVIDAKILVETQVEALQELSRVFGVHRVSEVQVLEFRDLGELAKEIASRTIEHVRDRKFAVRVKRSGRHGFTSLDVAREVGALLKPYSKGVDLENPDIEVEVEVRGNKAYLYSNVAMGPGGLPLGSSGRALVLFSGGFDSPVAAWMIAKRGVEVDFLHYVMGSSEVSRQAFSVARKLSEEWLSSYNPRFITVDFTPLIAEIEERIEWSYRQVVLRALMYMVADKIATELGYNTIVTGEALSQASSQTLANLVAVESAVSPRSIILRPLIGFDKEEIIEYSRRIGLYDYSSRVAETCAIAPTHVVTRISSEKLKSLIERLDVRLVERMAGEYRVVDVFSASPEEAVPGYSEEIDSIPGDSIIIDVRSYEEYKRDALPGAIHLSMVDFNNLPRDKPVVLYCTTGGISLLLARELRGKGFKAYSLRGGLARYRAGLEKTR.

The region spanning 58–160 (VEALQELSRV…GNKAYLYSNV (103 aa)) is the THUMP domain. Residues 178 to 179 (LF), 203 to 204 (HY), arginine 260, glycine 282, and glutamine 291 each bind ATP. Cysteine 341 and cysteine 444 are joined by a disulfide. One can recognise a Rhodanese domain in the interval 400 to 482 (IPGDSIIIDV…RYRAGLEKTR (83 aa)). The active-site Cysteine persulfide intermediate is cysteine 444.

This sequence belongs to the ThiI family.

Its subcellular location is the cytoplasm. The catalysed reaction is [ThiI sulfur-carrier protein]-S-sulfanyl-L-cysteine + a uridine in tRNA + 2 reduced [2Fe-2S]-[ferredoxin] + ATP + H(+) = [ThiI sulfur-carrier protein]-L-cysteine + a 4-thiouridine in tRNA + 2 oxidized [2Fe-2S]-[ferredoxin] + AMP + diphosphate. The enzyme catalyses [ThiS sulfur-carrier protein]-C-terminal Gly-Gly-AMP + S-sulfanyl-L-cysteinyl-[cysteine desulfurase] + AH2 = [ThiS sulfur-carrier protein]-C-terminal-Gly-aminoethanethioate + L-cysteinyl-[cysteine desulfurase] + A + AMP + 2 H(+). It functions in the pathway cofactor biosynthesis; thiamine diphosphate biosynthesis. Functionally, catalyzes the ATP-dependent transfer of a sulfur to tRNA to produce 4-thiouridine in position 8 of tRNAs, which functions as a near-UV photosensor. Also catalyzes the transfer of sulfur to the sulfur carrier protein ThiS, forming ThiS-thiocarboxylate. This is a step in the synthesis of thiazole, in the thiamine biosynthesis pathway. The sulfur is donated as persulfide by IscS. The protein is tRNA sulfurtransferase of Desulfurococcus amylolyticus (strain DSM 18924 / JCM 16383 / VKM B-2413 / 1221n) (Desulfurococcus kamchatkensis).